We begin with the raw amino-acid sequence, 288 residues long: NAD kinase (288 aa).

The Proton acceptor role is filled by Asp-73. Residues 73–74 (DG), Arg-78, 144–145 (NE), Asp-174, 185–190 (TAYSLS), and Ala-209 contribute to the NAD(+) site.

It belongs to the NAD kinase family. The cofactor is a divalent metal cation.

The protein resides in the cytoplasm. It catalyses the reaction NAD(+) + ATP = ADP + NADP(+) + H(+). In terms of biological role, involved in the regulation of the intracellular balance of NAD and NADP, and is a key enzyme in the biosynthesis of NADP. Catalyzes specifically the phosphorylation on 2'-hydroxyl of the adenosine moiety of NAD to yield NADP. This chain is NAD kinase, found in Porphyromonas gingivalis (strain ATCC 33277 / DSM 20709 / CIP 103683 / JCM 12257 / NCTC 11834 / 2561).